We begin with the raw amino-acid sequence, 326 residues long: tRNA(Ile)-lysidine synthase (326 aa).

25-30 is a binding site for ATP; the sequence is SGGQDS.

Belongs to the tRNA(Ile)-lysidine synthase family.

It localises to the cytoplasm. The enzyme catalyses cytidine(34) in tRNA(Ile2) + L-lysine + ATP = lysidine(34) in tRNA(Ile2) + AMP + diphosphate + H(+). Ligates lysine onto the cytidine present at position 34 of the AUA codon-specific tRNA(Ile) that contains the anticodon CAU, in an ATP-dependent manner. Cytidine is converted to lysidine, thus changing the amino acid specificity of the tRNA from methionine to isoleucine. The polypeptide is tRNA(Ile)-lysidine synthase (Prochlorococcus marinus (strain NATL1A)).